The following is a 332-amino-acid chain: Glycerol-3-phosphate dehydrogenase [NAD(P)+] (332 aa).

NADPH contacts are provided by S11, F12, K32, and K106. Sn-glycerol 3-phosphate is bound by residues K106, G137, and S139. A141 is a binding site for NADPH. The sn-glycerol 3-phosphate site is built by K192, D245, S255, R256, and N257. K192 functions as the Proton acceptor in the catalytic mechanism. R256 serves as a coordination point for NADPH. Residues V280 and E282 each coordinate NADPH.

Belongs to the NAD-dependent glycerol-3-phosphate dehydrogenase family.

The protein resides in the cytoplasm. The enzyme catalyses sn-glycerol 3-phosphate + NAD(+) = dihydroxyacetone phosphate + NADH + H(+). It carries out the reaction sn-glycerol 3-phosphate + NADP(+) = dihydroxyacetone phosphate + NADPH + H(+). It functions in the pathway membrane lipid metabolism; glycerophospholipid metabolism. Its function is as follows. Catalyzes the reduction of the glycolytic intermediate dihydroxyacetone phosphate (DHAP) to sn-glycerol 3-phosphate (G3P), the key precursor for phospholipid synthesis. The protein is Glycerol-3-phosphate dehydrogenase [NAD(P)+] of Staphylococcus carnosus (strain TM300).